Reading from the N-terminus, the 397-residue chain is Subtilisin-like serine protease Pen c 1 (397 aa).

The N-terminal stretch at 1-19 (MGFLKVLATSLATLAVVDA) is a signal peptide. A propeptide spans 20–115 (GTLLTASNTD…IEPDMIVNAT (96 aa)) (removed in mature form). The 79-residue stretch at 35–113 (SYIVVMNDDV…KYIEPDMIVN (79 aa)) folds into the Inhibitor I9 domain. Residues 125–397 (SWGLARISSK…SKLLYNGINV (273 aa)) enclose the Peptidase S8 domain. Residues Asp-157, His-188, and Ser-343 each act as charge relay system in the active site.

Belongs to the peptidase S8 family.

The protein localises to the secreted. Its activity is regulated as follows. Inhibited by 0.1 mM diisopropyl fluorophosphate (DFP), phenylmethanesulfonyl fluoride (PMSF), chymostatin and elastatinal. Not inhibited by N-alpha-p-tosyl-L-lysine chloromethylketone (TLCK), N-tosyl-L-phenylalanyl chloromethyl ketone (TPCK) or N-carbobenzoxy-L-phenylalanine chloromethylketone (ZPCK). Functionally, serine protease. Hydrolyzes azocasein. Cleaves peptide bonds of the oxidized insulin B chain preferably at 15-Leu-|-Tyr-16, but also at 4-Gln-|-His-5 and 24-Phe-|-Phe-25, and to a lesser extent at 5-His-|-Leu-6 and 25-Phe-|-Tyr-26. Hydrolyzes amide bonds between amino acids and 7-amino-4-methylcoumarin (AMC) in vitro. The protein is Subtilisin-like serine protease Pen c 1 of Penicillium citrinum.